The sequence spans 195 residues: dCTP deaminase (195 aa).

DCTP is bound by residues Arg-105–Arg-110, Asp-123, Thr-131–Glu-133, Gln-152, Tyr-166, Lys-173, and Gln-177. Catalysis depends on Glu-133, which acts as the Proton donor/acceptor. Residues Lys-159–Gln-195 form a disordered region. Residues Thr-160 to Ser-172 show a composition bias toward basic and acidic residues. Residues Tyr-174 to Lys-184 show a composition bias toward polar residues. Residues Gln-186–Gln-195 are compositionally biased toward basic and acidic residues.

The protein belongs to the dCTP deaminase family. In terms of assembly, homotrimer.

It carries out the reaction dCTP + H2O + H(+) = dUTP + NH4(+). The protein operates within pyrimidine metabolism; dUMP biosynthesis; dUMP from dCTP (dUTP route): step 1/2. In terms of biological role, catalyzes the deamination of dCTP to dUTP. This Haloarcula marismortui (strain ATCC 43049 / DSM 3752 / JCM 8966 / VKM B-1809) (Halobacterium marismortui) protein is dCTP deaminase.